Consider the following 339-residue polypeptide: Neutrophil cytosol factor 4 (339 aa).

Residues 19–140 (DVAVSANIAD…IFFYQSAYDA (122 aa)) enclose the PX domain. Residues 58–60 (RYR) and 92–94 (KVY) contribute to the a 1,2-diacyl-sn-glycero-3-phospho-(1D-myo-inositol-3-phosphate) site. Phosphothreonine is present on Thr154. The region spanning 170–229 (MEAPRAEALFDFTGNSKLELSFKAGDVIFLLSKINKDWLEGTSQGATGIFPGSFVKILKD) is the SH3 domain. Residues 237–329 (TNWLRCYFYE…FPWKLHVTQK (93 aa)) form the PB1 domain. Ser315 bears the Phosphoserine mark.

Component of the phagocyte NADPH oxidase complex composed of an obligatory core heterodimer formed by the membrane proteins CYBA and CYBB and the cytosolic regulatory subunits NCF1/p47-phox, NCF2/p67-phox, NCF4/p40-phox and the small GTPase RAC1 or RAC2. Part of a cytosolic complex composed at least by NCF1, NCF2 and NCF4. Interacts with NCF2. Interacts with NCF1. The NCF2-NCF4 complex interacts with GBP7 (via GB1/RHD3-type G domain).

The protein localises to the cytoplasm. Its subcellular location is the cytosol. It localises to the endosome membrane. The protein resides in the membrane. Subunit of the phagocyte NADPH oxidase complex that mediates the transfer of electrons from cytosolic NADPH to O2 to produce the superoxide anion (O2(-)). In the activated complex, electrons are first transferred from NADPH to flavin adenine dinucleotide (FAD) and subsequently transferred via two heme molecules to molecular oxygen, producing superoxide through an outer-sphere reaction. Activation of the NADPH oxidase complex is initiated by the assembly of cytosolic subunits of the NADPH oxidase complex with the core NADPH oxidase complex to form a complex at the plasma membrane or phagosomal membrane. This activation process is initiated by phosphorylation dependent binding of the cytosolic NCF1/p47-phox subunit to the C-terminus of CYBA/p22-phox. This chain is Neutrophil cytosol factor 4, found in Mus musculus (Mouse).